The chain runs to 436 residues: Protein arginine methyltransferase NDUFAF7, mitochondrial (436 aa).

The transit peptide at 1–41 (MNALVRRCVARAGLPCIWRGKCYSSGNEPAESNQVTPMLRH) directs the protein to the mitochondrion. Positions 411–436 (GSQERNACQSKTPSSSVAGFDELVWQ) are disordered. Polar residues predominate over residues 413–427 (QERNACQSKTPSSSV).

Belongs to the NDUFAF7 family. In terms of assembly, interacts with NDUFS2.

It localises to the mitochondrion. The enzyme catalyses L-arginyl-[protein] + 2 S-adenosyl-L-methionine = N(omega),N(omega)'-dimethyl-L-arginyl-[protein] + 2 S-adenosyl-L-homocysteine + 2 H(+). In terms of biological role, arginine methyltransferase involved in the assembly or stability of mitochondrial NADH:ubiquinone oxidoreductase complex (complex I). Acts by mediating symmetric dimethylation of 'Arg-118' of NDUFS2 after it assembles into the complex I, stabilizing the early intermediate complex. This is Protein arginine methyltransferase NDUFAF7, mitochondrial from Mus musculus (Mouse).